Here is a 487-residue protein sequence, read N- to C-terminus: Aromatic-L-amino-acid decarboxylase (487 aa).

Met1 bears the N-acetylmethionine mark. A run of 2 repeats spans residues 58–115 (EDIE…TELE) and 118–178 (MMDW…MQAA). The segment at 58 to 178 (EDIEKIIMPG…AASPELMQAA (121 aa)) is 2 X approximate tandem repeats. Thr82 serves as a coordination point for substrate. Pyridoxal 5'-phosphate is bound by residues Ala148 and Ser149. His192 provides a ligand contact to substrate. 2 residues coordinate pyridoxal 5'-phosphate: Thr246 and Asn300. An N6-(pyridoxal phosphate)lysine modification is found at Lys303.

The protein belongs to the group II decarboxylase family. Homodimer. Pyridoxal 5'-phosphate is required as a cofactor.

The enzyme catalyses L-dopa + H(+) = dopamine + CO2. The catalysed reaction is 5-hydroxy-L-tryptophan + H(+) = serotonin + CO2. It functions in the pathway catecholamine biosynthesis; dopamine biosynthesis; dopamine from L-tyrosine: step 2/2. Catalyzes the decarboxylation of L-3,4-dihydroxyphenylalanine (DOPA) to dopamine and L-5-hydroxytryptophan to serotonin. The protein is Aromatic-L-amino-acid decarboxylase (DDC) of Bos taurus (Bovine).